A 468-amino-acid polypeptide reads, in one-letter code: Adenosylhomocysteinase (468 aa).

Residues Thr-63, Asp-139, and Glu-164 each contribute to the substrate site. 165-167 (TTT) serves as a coordination point for NAD(+). Residues Lys-194 and Asp-198 each coordinate substrate. Residues Asn-199, 228 to 233 (GYGDVG), Glu-251, Asn-300, 321 to 323 (IGH), and Asn-374 each bind NAD(+).

It belongs to the adenosylhomocysteinase family. NAD(+) is required as a cofactor.

It localises to the cytoplasm. It catalyses the reaction S-adenosyl-L-homocysteine + H2O = L-homocysteine + adenosine. The protein operates within amino-acid biosynthesis; L-homocysteine biosynthesis; L-homocysteine from S-adenosyl-L-homocysteine: step 1/1. In terms of biological role, may play a key role in the regulation of the intracellular concentration of adenosylhomocysteine. The sequence is that of Adenosylhomocysteinase from Stutzerimonas stutzeri (strain A1501) (Pseudomonas stutzeri).